Reading from the N-terminus, the 442-residue chain is D-serine dehydratase (442 aa).

The residue at position 118 (lysine 118) is an N6-(pyridoxal phosphate)lysine.

The protein belongs to the serine/threonine dehydratase family. DsdA subfamily. Monomer. The cofactor is pyridoxal 5'-phosphate.

The enzyme catalyses D-serine = pyruvate + NH4(+). The polypeptide is D-serine dehydratase (Shigella flexneri serotype 5b (strain 8401)).